The following is a 475-amino-acid chain: MSPQTETKSSVGFKAGVKDYKLTYYTPEYETLDTDILAAFRVTPQPGVPPEEAGAAVAAESSTGTWTTVWTDGLTSLDRYKGRCYHIEPVAGEENQYICYVAYPLDLFEEGSVTNMFTSIVGNVFGFKALRALRLEDLRVPVAYIKTFQGPPHGIQVERDKLNKYGRPLLGCTIKPKLGLSAKNYGRAVYECLRGGLDFTKDDENVNSQPFMRWRDRFLFCAEAIYKAQAETGEIKGHYLNATAGTCEEMIKRAVFARELGVPIVMHDYITGGFTANTSLAHYCRDNGLLLHIHRAMHAVIDRQKNHGMHFRVLAKALRLSGGDHIHAGTVVGKLEGEREITLGFVDLLRDDFTEKDRSRGIYFTQSWVSTPGVLPVASGGIHVWHMPALTEIFGDDSVLQFGGGTLGHPWGNAPGAVANRVALEACVQARNEGRDLAREGNTIIREACKWSPELAAACEVWKEIKFEFQAMDTI.

Residues 1–2 (MS) constitute a propeptide that is removed on maturation. Residue Pro3 is modified to N-acetylproline. N6,N6,N6-trimethyllysine is present on Lys14. Substrate contacts are provided by Asn123 and Thr173. Lys175 (proton acceptor) is an active-site residue. Residue Lys177 coordinates substrate. Lys201, Asp203, and Glu204 together coordinate Mg(2+). At Lys201 the chain carries N6-carboxylysine. The active-site Proton acceptor is His294. The substrate site is built by Arg295, His327, and Ser379.

This sequence belongs to the RuBisCO large chain family. Type I subfamily. As to quaternary structure, heterohexadecamer of 8 large chains and 8 small chains; disulfide-linked. The disulfide link is formed within the large subunit homodimers. It depends on Mg(2+) as a cofactor. In terms of processing, the disulfide bond which can form in the large chain dimeric partners within the hexadecamer appears to be associated with oxidative stress and protein turnover.

Its subcellular location is the plastid. The protein resides in the chloroplast. It carries out the reaction 2 (2R)-3-phosphoglycerate + 2 H(+) = D-ribulose 1,5-bisphosphate + CO2 + H2O. It catalyses the reaction D-ribulose 1,5-bisphosphate + O2 = 2-phosphoglycolate + (2R)-3-phosphoglycerate + 2 H(+). In terms of biological role, ruBisCO catalyzes two reactions: the carboxylation of D-ribulose 1,5-bisphosphate, the primary event in carbon dioxide fixation, as well as the oxidative fragmentation of the pentose substrate in the photorespiration process. Both reactions occur simultaneously and in competition at the same active site. The protein is Ribulose bisphosphate carboxylase large chain of Cerastium glomeratum (Sticky chickweed).